Reading from the N-terminus, the 384-residue chain is Spermidine/putrescine import ATP-binding protein PotA (384 aa).

One can recognise an ABC transporter domain in the interval 6-238; it reads ITFNNVSKTF…PINHFVANFI (233 aa). Position 40–47 (40–47) interacts with ATP; the sequence is GASGSGKS.

It belongs to the ABC transporter superfamily. Spermidine/putrescine importer (TC 3.A.1.11.1) family. The complex is composed of two ATP-binding proteins (PotA), two transmembrane proteins (PotB and PotC) and a solute-binding protein (PotD).

It localises to the cell membrane. The catalysed reaction is ATP + H2O + polyamine-[polyamine-binding protein]Side 1 = ADP + phosphate + polyamineSide 2 + [polyamine-binding protein]Side 1.. In terms of biological role, part of the ABC transporter complex PotABCD involved in spermidine/putrescine import. Responsible for energy coupling to the transport system. This chain is Spermidine/putrescine import ATP-binding protein PotA, found in Streptococcus pyogenes serotype M6 (strain ATCC BAA-946 / MGAS10394).